The sequence spans 1072 residues: Dyslexia-associated protein KIAA0319 (1072 aa).

Positions 1–20 (MAPPTGVLSSLLLLVTIAGC) are cleaved as a signal peptide. The MANSC domain occupies 21-99 (ARKQCSEGRT…PKKMGPIRSY (79 aa)). Over 21–955 (ARKQCSEGRT…WDGESNCEWS (935 aa)) the chain is Extracellular. 2 disordered regions span residues 168-277 (LQPS…SLPP) and 295-327 (VTPG…SPTT). 3 N-linked (GlcNAc...) asparagine glycosylation sites follow: Asn196, Asn219, and Asn262. Residues 254–265 (SQLQEQSSNSSG) show a composition bias toward polar residues. Low complexity predominate over residues 311–320 (AAPSESTPSE). PKD domains lie at 341–427 (DNLI…VKPA), 435–524 (VAVV…VNNA), 530–620 (VANA…VQPE), 621–714 (NNRP…VKKE), and 720–811 (RARA…VQPD). Residues Asn394, Asn421, Asn498, Asn513, Asn536, and Asn551 are each glycosylated (N-linked (GlcNAc...) asparagine). A glycan (N-linked (GlcNAc...) asparagine) is linked at Asn733. Residues 956–976 (IFYVTVLAFTLIVLTGGFTWL) form a helical membrane-spanning segment. Residues 977–1072 (CICCCKRQKR…ASFSYCSKDR (96 aa)) are Cytoplasmic-facing. An Endocytosis signal motif is present at residues 995–998 (YTIL). The segment at 1045 to 1072 (KMERGNPKVSMNGSIRNGASFSYCSKDR) is disordered. A compositionally biased stretch (polar residues) spans 1053–1072 (VSMNGSIRNGASFSYCSKDR).

In terms of assembly, homodimer. Interacts with AP2M1; required for clathrin-mediated endocytosis. N-glycosylated. In terms of processing, O-glycosylated. Post-translationally, shedding of the extracellular domain and intramembrane cleavage produce several proteolytic products. The intramembrane cleavage releases a soluble cytoplasmic polypeptide that translocates to the nucleolus. As to expression, detected in adult brain cortex and fetal frontal lobe (at protein level). Highly expressed in brain cortex, putamen, amygdala, hippocampus and cerebellum.

The protein localises to the cell membrane. The protein resides in the early endosome membrane. Its function is as follows. Involved in neuronal migration during development of the cerebral neocortex. May function in a cell autonomous and a non-cell autonomous manner and play a role in appropriate adhesion between migrating neurons and radial glial fibers. May also regulate growth and differentiation of dendrites. This Homo sapiens (Human) protein is Dyslexia-associated protein KIAA0319 (KIAA0319).